Here is a 338-residue protein sequence, read N- to C-terminus: DNA fragmentation factor subunit beta (338 aa).

Positions Lys4–Gly80 constitute a CIDE-N domain.

Heterodimer of DFFA and DFFB. Interacts with H1-1.

Its subcellular location is the cytoplasm. It localises to the nucleus. Inhibited by DFFA (DFF45). In terms of biological role, nuclease that induces DNA fragmentation and chromatin condensation during apoptosis. Degrades naked DNA and induces apoptotic morphology. The protein is DNA fragmentation factor subunit beta (DFFB) of Homo sapiens (Human).